Consider the following 357-residue polypeptide: Sorbitol dehydrogenase (357 aa).

Position 2 is an N-acetylalanine (Ala-2). Cys-45 is a Zn(2+) binding site. Tyr-51 lines the substrate pocket. Residues His-70 and Glu-71 each contribute to the Zn(2+) site. Glu-156 serves as a coordination point for substrate. NAD(+)-binding residues include Ile-184, Asp-204, and Arg-209. A phosphoserine mark is found at Ser-211 and Ser-225. NAD(+) contacts are provided by residues 273-275 (VGL) and 297-299 (VFR). 2 residues coordinate substrate: Arg-299 and Tyr-300.

It belongs to the zinc-containing alcohol dehydrogenase family. As to quaternary structure, homotetramer. Requires Zn(2+) as cofactor.

It is found in the mitochondrion membrane. The protein localises to the cell projection. It localises to the cilium. Its subcellular location is the flagellum. It catalyses the reaction xylitol + NAD(+) = D-xylulose + NADH + H(+). The enzyme catalyses L-iditol + NAD(+) = keto-L-sorbose + NADH + H(+). It carries out the reaction keto-D-fructose + NADH + H(+) = D-sorbitol + NAD(+). In terms of biological role, polyol dehydrogenase that catalyzes the reversible NAD(+)-dependent oxidation of various sugar alcohols. Is active with xylitol, L-iditol and D-sorbitol (D-glucitol) as substrates, leading to the C2-oxidized products D-xylulose, L-sorbose and D-fructose, respectively. Is a key enzyme in the polyol pathway that interconverts glucose and fructose via sorbitol, which constitutes an important alternate route for glucose metabolism. May play a role in sperm motility by using sorbitol as an alternative energy source for sperm motility. This chain is Sorbitol dehydrogenase (SORD), found in Pongo abelii (Sumatran orangutan).